Consider the following 727-residue polypeptide: UvrABC system protein C (727 aa).

The 80-residue stretch at 16–95 (VDPGVYKFRD…IKEFDPRFNV (80 aa)) folds into the GIY-YIG domain. Residues 208–243 (DRLVRQLEARMQEASEELDFETAARLRDDVGALRRA) enclose the UVR domain. 2 disordered regions span residues 503 to 527 (DADQ…QTGR) and 679 to 727 (SADV…TGVE). A compositionally biased stretch (basic and acidic residues) spans 701 to 711 (NGADIPREPVE). Positions 718–727 (QSASQRTGVE) are enriched in polar residues.

Belongs to the UvrC family. Interacts with UvrB in an incision complex.

It is found in the cytoplasm. In terms of biological role, the UvrABC repair system catalyzes the recognition and processing of DNA lesions. UvrC both incises the 5' and 3' sides of the lesion. The N-terminal half is responsible for the 3' incision and the C-terminal half is responsible for the 5' incision. This chain is UvrABC system protein C, found in Rhodococcus jostii (strain RHA1).